The following is a 44-amino-acid chain: Mu-conotoxin-like Cal 12.1.2f (44 aa).

4 disulfides stabilise this stretch: Cys3–Cys15, Cys10–Cys27, Cys17–Cys32, and Cys26–Cys38. At Trp16 the chain carries 6'-bromotryptophan. 4-hydroxyproline is present on Pro22. 6'-bromotryptophan occurs at positions 36 and 37. The residue at position 39 (Pro39) is a 4-hydroxyproline. Residue Trp43 is modified to 6'-bromotryptophan.

As to expression, expressed by the venom duct.

It localises to the secreted. In terms of biological role, mu-conotoxins block voltage-gated sodium channels. This toxin reversibly blocks voltage-gated sodium channel in cephalopods, with no alteration in the voltage dependence of sodium conductance or on the kinetics of inactivation. The sequence is that of Mu-conotoxin-like Cal 12.1.2f from Californiconus californicus (California cone).